The sequence spans 436 residues: Protein translocase subunit SecY (436 aa).

10 helical membrane-spanning segments follow: residues 19 to 39 (ILFT…TVPG), 68 to 88 (FSVF…VQLL), 116 to 136 (YISL…FNAL), 151 to 171 (LFIG…GEQI), 179 to 199 (GVSM…VKGI), 216 to 236 (IIFV…TTYV), 269 to 289 (VIPV…LQFL), 313 to 333 (GIAM…FVQI), 372 to 392 (VGSL…DLFG), and 395 to 415 (DTVA…IEGM).

The protein belongs to the SecY/SEC61-alpha family. Component of the Sec protein translocase complex. Heterotrimer consisting of SecY, SecE and SecG subunits. The heterotrimers can form oligomers, although 1 heterotrimer is thought to be able to translocate proteins. Interacts with the ribosome. Interacts with SecDF, and other proteins may be involved. Interacts with SecA.

Its subcellular location is the cell membrane. The central subunit of the protein translocation channel SecYEG. Consists of two halves formed by TMs 1-5 and 6-10. These two domains form a lateral gate at the front which open onto the bilayer between TMs 2 and 7, and are clamped together by SecE at the back. The channel is closed by both a pore ring composed of hydrophobic SecY resides and a short helix (helix 2A) on the extracellular side of the membrane which forms a plug. The plug probably moves laterally to allow the channel to open. The ring and the pore may move independently. This chain is Protein translocase subunit SecY, found in Streptococcus gordonii (strain Challis / ATCC 35105 / BCRC 15272 / CH1 / DL1 / V288).